Consider the following 675-residue polypeptide: Methionine--tRNA ligase (675 aa).

Positions 15-25 (PYANGSIHLGH) match the 'HIGH' region motif. Zn(2+) is bound by residues C146, C149, C159, and C162. Residues 331-335 (KMSKS) carry the 'KMSKS' region motif. K334 serves as a coordination point for ATP. The tRNA-binding domain occupies 574 to 675 (DFAKIDLRIA…EGAQPGMKVK (102 aa)).

The protein belongs to the class-I aminoacyl-tRNA synthetase family. MetG type 1 subfamily. Homodimer. The cofactor is Zn(2+).

The protein resides in the cytoplasm. It carries out the reaction tRNA(Met) + L-methionine + ATP = L-methionyl-tRNA(Met) + AMP + diphosphate. Is required not only for elongation of protein synthesis but also for the initiation of all mRNA translation through initiator tRNA(fMet) aminoacylation. The sequence is that of Methionine--tRNA ligase from Pseudoalteromonas atlantica (strain T6c / ATCC BAA-1087).